The following is a 130-amino-acid chain: ATP synthase epsilon chain, chloroplastic (130 aa).

This sequence belongs to the ATPase epsilon chain family. F-type ATPases have 2 components, CF(1) - the catalytic core - and CF(0) - the membrane proton channel. CF(1) has five subunits: alpha(3), beta(3), gamma(1), delta(1), epsilon(1). CF(0) has three main subunits: a, b and c.

The protein resides in the plastid. The protein localises to the chloroplast thylakoid membrane. In terms of biological role, produces ATP from ADP in the presence of a proton gradient across the membrane. The protein is ATP synthase epsilon chain, chloroplastic of Emiliania huxleyi (Coccolithophore).